We begin with the raw amino-acid sequence, 129 residues long: Ig lambda-1 chain V region S43 (129 aa).

The signal sequence occupies residues 1–19 (MAWISLILSLLALSSGAIS). Position 20 is a pyrrolidone carboxylic acid (glutamine 20). The region spanning 20 to 125 (QAVVTQESAL…HWVFGGGTKL (106 aa)) is the Ig-like domain.

The chain is Ig lambda-1 chain V region S43 from Mus musculus (Mouse).